The chain runs to 309 residues: Pyrroline-5-carboxylate reductase 1, mitochondrial (309 aa).

N-acetylserine is present on Ser-2. NADP(+) is bound by residues 6–11 (IGAGQL) and Ser-34. The NADPH site is built by Ala-8, Gln-10, Leu-11, Ser-34, Asp-36, Asn-56, Val-70, Lys-71, and Ala-97. Residues Asn-56, 69–72 (AVKP), and 95–97 (CAA) each bind NADP(+). Position 164 (Glu-164) interacts with L-proline. Residue Asn-230 participates in NADPH binding. The L-proline site is built by Ala-237 and Thr-238. Residues Ser-278 and Ser-301 each carry the phosphoserine modification.

This sequence belongs to the pyrroline-5-carboxylate reductase family. Homodecamer; composed of 5 homodimers. Interacts with LTO1. Highly expressed in osteoblasts and skin.

Its subcellular location is the mitochondrion. The catalysed reaction is L-proline + NADP(+) = (S)-1-pyrroline-5-carboxylate + NADPH + 2 H(+). The enzyme catalyses L-proline + NAD(+) = (S)-1-pyrroline-5-carboxylate + NADH + 2 H(+). It participates in amino-acid biosynthesis; L-proline biosynthesis; L-proline from L-glutamate 5-semialdehyde: step 1/1. Oxidoreductase that catalyzes the last step in proline biosynthesis, which corresponds to the reduction of pyrroline-5-carboxylate to L-proline using NAD(P)H. At physiologic concentrations, has higher specific activity in the presence of NADH. Involved in the cellular response to oxidative stress. This Mus musculus (Mouse) protein is Pyrroline-5-carboxylate reductase 1, mitochondrial.